We begin with the raw amino-acid sequence, 418 residues long: MSCSARLKTNLGMTSALSTHEVLNSNDTMCEILILLPPETIYKLILVSKRWLEIIASPCFRHTYLAKWKPNFELIGFFVCSSMYLGRRIDGTRRPRAEPSLPLLSTSSIGDEIESSGILKKLGYYIDSADGLLLCGRHPKAYYLWDPSTQKQQQLPRPRVHFEELCMSLISEDSPDQGFSYKVVRAECVAFPVNSTKVKVETFSSKTSTWSYSELICLEPLSLSPWTPGRVIKGVVYWHARGGKIAIYDSNSEEKRIDVIKLPKTYDYDEQVLGETDDGSLQYGWSNKSVMEVWKLEKVGNVLEWNLLFKVNFKAMWKMNQAVATRFSTWTKETQLLALFNQKSDLVYIRCDTQIFIYHTETKRVEVVQYQGRKSTLVWDFNKVVPYFRRTWPCSPLFENNAMMIDTPQCNASSAGSN.

Residues 18–66 (STHEVLNSNDTMCEILILLPPETIYKLILVSKRWLEIIASPCFRHTYLA) enclose the F-box domain.

This is F-box protein At5g03970 from Arabidopsis thaliana (Mouse-ear cress).